The primary structure comprises 144 residues: 3-dehydroquinate dehydratase (144 aa).

The active-site Proton acceptor is the Y22. Residues N74, H80, and D87 each coordinate substrate. H100 functions as the Proton donor in the catalytic mechanism. Substrate is bound by residues 101-102 and R111; that span reads LS.

The protein belongs to the type-II 3-dehydroquinase family. In terms of assembly, homododecamer.

The catalysed reaction is 3-dehydroquinate = 3-dehydroshikimate + H2O. It participates in metabolic intermediate biosynthesis; chorismate biosynthesis; chorismate from D-erythrose 4-phosphate and phosphoenolpyruvate: step 3/7. Catalyzes a trans-dehydration via an enolate intermediate. This chain is 3-dehydroquinate dehydratase, found in Clostridium perfringens (strain ATCC 13124 / DSM 756 / JCM 1290 / NCIMB 6125 / NCTC 8237 / Type A).